The chain runs to 87 residues: U3-theraphotoxin-Hhn1f (87 aa).

Residues 1–24 form the signal peptide; that stretch reads MVNMKASMFLTSAGLVLLFVVCYA. Positions 25 to 52 are excised as a propeptide; the sequence is SESEEKEFPKEMLSSIFAVDNDFKQEER. Disulfide bonds link Cys54/Cys67, Cys61/Cys72, and Cys66/Cys79.

The protein belongs to the neurotoxin 10 (Hwtx-1) family. 51 (Hntx-8) subfamily. Hntx-8 sub-subfamily. As to expression, expressed by the venom gland.

The protein resides in the secreted. Ion channel inhibitor. This Cyriopagopus hainanus (Chinese bird spider) protein is U3-theraphotoxin-Hhn1f.